The sequence spans 366 residues: Cobalt-precorrin-5B C(1)-methyltransferase (366 aa).

It belongs to the CbiD family.

It catalyses the reaction Co-precorrin-5B + S-adenosyl-L-methionine = Co-precorrin-6A + S-adenosyl-L-homocysteine. The protein operates within cofactor biosynthesis; adenosylcobalamin biosynthesis; cob(II)yrinate a,c-diamide from sirohydrochlorin (anaerobic route): step 6/10. Its function is as follows. Catalyzes the methylation of C-1 in cobalt-precorrin-5B to form cobalt-precorrin-6A. The protein is Cobalt-precorrin-5B C(1)-methyltransferase of Pseudomonas aeruginosa (strain UCBPP-PA14).